The primary structure comprises 147 residues: Phosphoribosyl-AMP cyclohydrolase (147 aa).

Asp91 is a binding site for Mg(2+). Cys92 is a Zn(2+) binding site. Residues Asp93 and Asp95 each contribute to the Mg(2+) site. 2 residues coordinate Zn(2+): Cys108 and Cys115.

This sequence belongs to the PRA-CH family. In terms of assembly, homodimer. Mg(2+) serves as cofactor. Requires Zn(2+) as cofactor.

Its subcellular location is the cytoplasm. It carries out the reaction 1-(5-phospho-beta-D-ribosyl)-5'-AMP + H2O = 1-(5-phospho-beta-D-ribosyl)-5-[(5-phospho-beta-D-ribosylamino)methylideneamino]imidazole-4-carboxamide. It participates in amino-acid biosynthesis; L-histidine biosynthesis; L-histidine from 5-phospho-alpha-D-ribose 1-diphosphate: step 3/9. In terms of biological role, catalyzes the hydrolysis of the adenine ring of phosphoribosyl-AMP. The chain is Phosphoribosyl-AMP cyclohydrolase from Rhodopseudomonas palustris (strain BisB5).